A 186-amino-acid chain; its full sequence is CoB--CoM heterodisulfide reductase iron-sulfur subunit C 2 (186 aa).

4Fe-4S ferredoxin-type domains are found at residues 26–56 (GEDI…AYRT) and 67–99 (LDDV…TEII). Residues C36, C39, C42, C46, C79, C82, C85, and C89 each contribute to the [4Fe-4S] cluster site.

This sequence belongs to the HdrC family. The heterodisulfide reductase is composed of three subunits; HdrA, HdrB and HdrC. Requires [4Fe-4S] cluster as cofactor.

Its pathway is cofactor metabolism; coenzyme M-coenzyme B heterodisulfide reduction; coenzyme B and coenzyme M from coenzyme M-coenzyme B heterodisulfide: step 1/1. Functionally, part of a complex that catalyzes the reversible reduction of CoM-S-S-CoB to the thiol-coenzymes H-S-CoM (coenzyme M) and H-S-CoB (coenzyme B). The chain is CoB--CoM heterodisulfide reductase iron-sulfur subunit C 2 (hdrC2) from Methanocaldococcus jannaschii (strain ATCC 43067 / DSM 2661 / JAL-1 / JCM 10045 / NBRC 100440) (Methanococcus jannaschii).